A 308-amino-acid polypeptide reads, in one-letter code: Transmembrane and ubiquitin-like domain-containing protein 1 (308 aa).

Residues Val11–Thr31 traverse the membrane as a helical segment. Residues Thr39–Ser162 form a disordered region. Residues Pro63–Gly93 show a composition bias toward polar residues. Over residues Ser103–Val115 the composition is skewed to low complexity. Residues Pro132–Leu149 show a composition bias toward polar residues. In terms of domain architecture, Ubiquitin-like spans Ile169–Ser242. Transmembrane regions (helical) follow at residues Val253–Trp273 and Phe283–Phe303.

The protein localises to the membrane. The protein resides in the cytoplasm. Its subcellular location is the nucleus. In terms of biological role, may contribute to the regulation of translation during cell-cycle progression. May contribute to the regulation of cell proliferation. The membrane form is involved in sterol-regulated ubiquitination and degradation of HMG-CoA reductase HMGCR. May be involved in centrosome assembly. This is Transmembrane and ubiquitin-like domain-containing protein 1 (tmub1) from Xenopus laevis (African clawed frog).